Consider the following 320-residue polypeptide: Cytochrome f (320 aa).

The first 35 residues, Met1–Ala35, serve as a signal peptide directing secretion. 4 residues coordinate heme: Tyr36, Cys56, Cys59, and His60. A helical membrane pass occupies residues Val286 to Lys306.

This sequence belongs to the cytochrome f family. The 4 large subunits of the cytochrome b6-f complex are cytochrome b6, subunit IV (17 kDa polypeptide, petD), cytochrome f and the Rieske protein, while the 4 small subunits are PetG, PetL, PetM and PetN. The complex functions as a dimer. Requires heme as cofactor.

The protein resides in the plastid. It is found in the chloroplast thylakoid membrane. In terms of biological role, component of the cytochrome b6-f complex, which mediates electron transfer between photosystem II (PSII) and photosystem I (PSI), cyclic electron flow around PSI, and state transitions. This Crucihimalaya wallichii (Rock-cress) protein is Cytochrome f.